A 214-amino-acid chain; its full sequence is Rac-like GTP-binding protein 3 (214 aa).

Residue 15-22 coordinates GTP; that stretch reads GDGAVGKT. Residues 37 to 45 carry the Effector region motif; the sequence is YIPTVFDNF. GTP is bound by residues 62–66 and 120–123; these read DTAGQ and TKLD.

This sequence belongs to the small GTPase superfamily. Rho family. May be palmitoylated.

It localises to the cytoplasm. Its subcellular location is the membrane. Functionally, inactive GDP-bound Rho GTPases reside in the cytosol, are found in a complex with Rho GDP-dissociation inhibitors (Rho GDIs), and are released from the GDI protein in order to translocate to membranes upon activation. The protein is Rac-like GTP-binding protein 3 (RAC3) of Oryza sativa subsp. japonica (Rice).